The sequence spans 347 residues: GMP reductase (347 aa).

108–131 (ADFDKMKQILALSPSLKFICIDVA) provides a ligand contact to NADP(+). K(+)-binding residues include glycine 181 and glycine 183. Cysteine 186 functions as the Thioimidate intermediate in the catalytic mechanism. Position 216-239 (216-239 (IVSDGGCSVPGDVAKAFGGGADFV)) interacts with NADP(+).

This sequence belongs to the IMPDH/GMPR family. GuaC type 1 subfamily. In terms of assembly, homotetramer.

It carries out the reaction IMP + NH4(+) + NADP(+) = GMP + NADPH + 2 H(+). Catalyzes the irreversible NADPH-dependent deamination of GMP to IMP. It functions in the conversion of nucleobase, nucleoside and nucleotide derivatives of G to A nucleotides, and in maintaining the intracellular balance of A and G nucleotides. This chain is GMP reductase, found in Yersinia pestis bv. Antiqua (strain Antiqua).